We begin with the raw amino-acid sequence, 143 residues long: Putative pre-16S rRNA nuclease (143 aa).

Belongs to the YqgF nuclease family.

Its subcellular location is the cytoplasm. Functionally, could be a nuclease involved in processing of the 5'-end of pre-16S rRNA. This chain is Putative pre-16S rRNA nuclease, found in Lactococcus lactis subsp. cremoris (strain MG1363).